Here is a 486-residue protein sequence, read N- to C-terminus: Glutamyl-tRNA(Gln) amidotransferase subunit A (486 aa).

Catalysis depends on charge relay system residues Lys-75 and Ser-150. The active-site Acyl-ester intermediate is the Ser-174.

It belongs to the amidase family. GatA subfamily. As to quaternary structure, heterotrimer of A, B and C subunits.

It catalyses the reaction L-glutamyl-tRNA(Gln) + L-glutamine + ATP + H2O = L-glutaminyl-tRNA(Gln) + L-glutamate + ADP + phosphate + H(+). In terms of biological role, allows the formation of correctly charged Gln-tRNA(Gln) through the transamidation of misacylated Glu-tRNA(Gln) in organisms which lack glutaminyl-tRNA synthetase. The reaction takes place in the presence of glutamine and ATP through an activated gamma-phospho-Glu-tRNA(Gln). The sequence is that of Glutamyl-tRNA(Gln) amidotransferase subunit A from Nostoc sp. (strain PCC 7120 / SAG 25.82 / UTEX 2576).